The primary structure comprises 484 residues: Transcription factor TGAL4 (484 aa).

The segment covering 1–11 (MGEASSSSGHP) has biased composition (polar residues). Disordered regions lie at residues 1 to 22 (MGEA…GYGF), 84 to 137 (ATAA…NASS), and 155 to 181 (QQEQ…DPKT). Residues 123–137 (SESSSKNNSNQNASS) show a composition bias toward low complexity. Residues 163 to 173 (ATNSPTHSSKT) are compositionally biased toward polar residues. Residues 178–222 (DPKTMRRLAQNREAARKSRLRKKAYIQQLESSKLKLAQMEQDIHR) form the bZIP domain. The basic motif stretch occupies residues 180–200 (KTMRRLAQNREAARKSRLRKK). The leucine-zipper stretch occupies residues 206–220 (LESSKLKLAQMEQDI). Residues 241–455 (AAMFDVDYAR…RALSSLWASR (215 aa)) form the DOG1 domain.

The protein belongs to the bZIP family. Interacts with NPR1/NH1 and NPR3/NH3.

The protein resides in the nucleus. Its function is as follows. Transcriptional regulator involved in defense response. The polypeptide is Transcription factor TGAL4 (Oryza sativa subsp. japonica (Rice)).